A 171-amino-acid chain; its full sequence is 3-hydroxydecanoyl-[acyl-carrier-protein] dehydratase (171 aa).

The active site involves His-70.

It belongs to the thioester dehydratase family. FabA subfamily. In terms of assembly, homodimer.

It is found in the cytoplasm. It carries out the reaction a (3R)-hydroxyacyl-[ACP] = a (2E)-enoyl-[ACP] + H2O. The enzyme catalyses (3R)-hydroxydecanoyl-[ACP] = (2E)-decenoyl-[ACP] + H2O. It catalyses the reaction (2E)-decenoyl-[ACP] = (3Z)-decenoyl-[ACP]. Its pathway is lipid metabolism; fatty acid biosynthesis. In terms of biological role, necessary for the introduction of cis unsaturation into fatty acids. Catalyzes the dehydration of (3R)-3-hydroxydecanoyl-ACP to E-(2)-decenoyl-ACP and then its isomerization to Z-(3)-decenoyl-ACP. Can catalyze the dehydratase reaction for beta-hydroxyacyl-ACPs with saturated chain lengths up to 16:0, being most active on intermediate chain length. This chain is 3-hydroxydecanoyl-[acyl-carrier-protein] dehydratase, found in Pseudomonas fluorescens (strain ATCC BAA-477 / NRRL B-23932 / Pf-5).